The following is a 353-amino-acid chain: JmjC domain-containing protein E (353 aa).

The region spanning 138 to 348 (YYIQYQNNSL…ETTKYQKQIK (211 aa)) is the JmjC domain.

This chain is JmjC domain-containing protein E (jcdE), found in Dictyostelium discoideum (Social amoeba).